Reading from the N-terminus, the 518-residue chain is UPF0053 inner membrane protein YoaE (518 aa).

At Met1–Leu13 the chain is on the cytoplasmic side. The chain crosses the membrane as a helical span at residues Leu14–Leu34. Residues Ala35–Leu48 are Periplasmic-facing. A helical transmembrane segment spans residues Leu49–Val69. Residues Thr70–Val78 are Cytoplasmic-facing. Residues Met79–Phe99 form a helical membrane-spanning segment. Topologically, residues Lys100–Ser124 are periplasmic. Residues Phe125–Ile145 form a helical membrane-spanning segment. At Thr146–Gly149 the chain is on the cytoplasmic side. A helical membrane pass occupies residues Met150–Leu170. Over Ala171–Thr184 the chain is Periplasmic. The chain crosses the membrane as a helical span at residues Val185–Phe205. Position 206 (Gly206) is a topological domain, cytoplasmic. Residues Phe207 to Phe227 traverse the membrane as a helical segment. Residues Asn228–Leu354 are Periplasmic-facing. 2 CBS domains span residues Met304 to Val363 and Ala367 to Glu427. Residues Val355 to Val375 traverse the membrane as a helical segment. Residues Pro376–Glu518 lie on the Cytoplasmic side of the membrane.

It belongs to the UPF0053 family.

The protein resides in the cell inner membrane. The polypeptide is UPF0053 inner membrane protein YoaE (yoaE) (Escherichia coli O157:H7).